We begin with the raw amino-acid sequence, 29 residues long: Toxin Bl-4 (29 aa).

Belongs to the long (4 C-C) scorpion toxin superfamily. Sodium channel inhibitor family. Beta subfamily. In terms of tissue distribution, expressed by the venom gland.

It is found in the secreted. Excitatory insect beta-toxins induce a spastic paralysis. They bind voltage-independently at site-4 of sodium channels (Nav) and shift the voltage of activation toward more negative potentials thereby affecting sodium channel activation and promoting spontaneous and repetitive firing. The fraction to which this protein belongs exhibits low toxicity and induces transient paralysis in all insects tested (the crickets A.domesticus). This Buthacus leptochelys (Egyptian fat-tailed scorpion) protein is Toxin Bl-4.